The primary structure comprises 249 residues: Undecaprenyl-diphosphatase (249 aa).

The next 8 helical transmembrane spans lie at 11–31 (GLTE…TAIF), 35–55 (PDVG…LIFV), 80–100 (LVLS…FIES), 101–121 (VFSS…LMLL), 135–155 (IPYF…LPGI), 180–200 (FLMS…NVAF), 202–222 (TEQI…LYLV), and 226–246 (VIGG…FFVL).

Belongs to the UppP family.

The protein localises to the cell membrane. The catalysed reaction is di-trans,octa-cis-undecaprenyl diphosphate + H2O = di-trans,octa-cis-undecaprenyl phosphate + phosphate + H(+). Functionally, catalyzes the dephosphorylation of undecaprenyl diphosphate (UPP). The protein is Undecaprenyl-diphosphatase of Methanococcus maripaludis (strain C7 / ATCC BAA-1331).